The chain runs to 363 residues: Protein-arginine kinase (363 aa).

A Phosphagen kinase C-terminal domain is found at 24 to 255; sequence IVLSSRIRLA…QQLIAQERAA (232 aa). ATP is bound by residues 27-31, histidine 92, arginine 126, 177-181, and 208-213; these read SSRIR, RASVM, and RGTYGE. An RDXXRA motif of the pArg binding pocket involved in allosteric regulation motif is present at residues 338–343; sequence RDVRRA.

It belongs to the ATP:guanido phosphotransferase family.

It carries out the reaction L-arginyl-[protein] + ATP = N(omega)-phospho-L-arginyl-[protein] + ADP + H(+). Its activity is regulated as follows. Appears to be allosterically activated by the binding of pArg-containing polypeptides to the pArg-binding pocket localized in the C-terminal domain of McsB. In terms of biological role, catalyzes the specific phosphorylation of arginine residues in a large number of proteins. Is part of the bacterial stress response system. Protein arginine phosphorylation has a physiologically important role and is involved in the regulation of many critical cellular processes, such as protein homeostasis, motility, competence, and stringent and stress responses, by regulating gene expression and protein activity. This is Protein-arginine kinase from Geobacillus thermodenitrificans (strain NG80-2).